A 342-amino-acid chain; its full sequence is Spore photoproduct lyase (342 aa).

The Radical SAM core domain maps to serine 77–arginine 305. Residues cysteine 91, cysteine 95, and cysteine 98 each contribute to the [4Fe-4S] cluster site. Residues glutamate 218–alanine 235 constitute a DNA-binding region (H-T-H motif).

This sequence belongs to the radical SAM superfamily. SPL family. Monomer or homodimer. [4Fe-4S] cluster serves as cofactor. The cofactor is S-adenosyl-L-methionine.

It catalyses the reaction (5R)-5,6-dihydro-5-(thymidin-7-yl)thymidine in DNA = a thymidine dimer in DNA. In terms of biological role, involved in repair of UV radiation-induced DNA damage during spore germination. Can repair thymine dimer 5-thyminyl-5,6-dihydrothymine (known as spore photoproduct (SP)) by in situ monomerization of SP to two thymines. This is Spore photoproduct lyase (splB) from Bacillus subtilis (strain 168).